We begin with the raw amino-acid sequence, 87 residues long: Elastase inhibitor AFLEI (87 aa).

An N-terminal signal peptide occupies residues 1–19 (MKFSLACLLALAGLQAALA). A disulfide bond links Cys-24 and Cys-86.

Its subcellular location is the secreted. Elastase inhibitor. This chain is Elastase inhibitor AFLEI, found in Aspergillus fumigatus (strain CBS 144.89 / FGSC A1163 / CEA10) (Neosartorya fumigata).